The chain runs to 416 residues: Trehalose synthase (416 aa).

It belongs to the glycosyltransferase group 1 family. Glycosyltransferase 4 subfamily. Homodimer. Requires Mg(2+) as cofactor.

It carries out the reaction an NDP-alpha-D-glucose + D-glucose = alpha,alpha-trehalose + a ribonucleoside 5'-diphosphate + H(+). Its activity is regulated as follows. Inhibited by 20 mM Fe(3+) and Mn(2+). Partially inhibited by Zn(2+) and Ni(2+). Activity is slightly enhanced by 2 mM Fe (3+), Mn (2+), Ca(2+) or Li(+) and by 20 mM Mg(2+), Ca(2+) or Li(+). Synthesizes trehalose from ADP-glucose and glucose. The reaction is reversible, the equilibrium strongly favors trehalose synthesis. This Rubrobacter xylanophilus (strain DSM 9941 / JCM 11954 / NBRC 16129 / PRD-1) protein is Trehalose synthase.